A 112-amino-acid polypeptide reads, in one-letter code: Cytochrome c type-1 (112 aa).

Positions 20, 23, 24, and 85 each coordinate heme c.

Binds 1 heme c group covalently per subunit.

It localises to the mitochondrion intermembrane space. In terms of biological role, electron carrier between complex III (ubiquinol-cytochrome c oxireductase) and complex IV (cytochrome c oxidase). This Ascaris suum (Pig roundworm) protein is Cytochrome c type-1.